A 105-amino-acid chain; its full sequence is Large ribosomal subunit protein bL21 (105 aa).

The protein belongs to the bacterial ribosomal protein bL21 family. As to quaternary structure, part of the 50S ribosomal subunit. Contacts protein L20.

Its function is as follows. This protein binds to 23S rRNA in the presence of protein L20. The protein is Large ribosomal subunit protein bL21 of Methylobacterium nodulans (strain LMG 21967 / CNCM I-2342 / ORS 2060).